Consider the following 432-residue polypeptide: Enolase (432 aa).

Glutamine 167 contacts (2R)-2-phosphoglycerate. The active-site Proton donor is glutamate 209. Mg(2+)-binding residues include aspartate 246, glutamate 289, and aspartate 316. (2R)-2-phosphoglycerate is bound by residues lysine 341, arginine 370, serine 371, and lysine 392. Lysine 341 (proton acceptor) is an active-site residue.

This sequence belongs to the enolase family. Mg(2+) serves as cofactor.

The protein resides in the cytoplasm. It is found in the secreted. The protein localises to the cell surface. It catalyses the reaction (2R)-2-phosphoglycerate = phosphoenolpyruvate + H2O. The protein operates within carbohydrate degradation; glycolysis; pyruvate from D-glyceraldehyde 3-phosphate: step 4/5. Functionally, catalyzes the reversible conversion of 2-phosphoglycerate (2-PG) into phosphoenolpyruvate (PEP). It is essential for the degradation of carbohydrates via glycolysis. The protein is Enolase of Petrotoga mobilis (strain DSM 10674 / SJ95).